Consider the following 222-residue polypeptide: UPF0758 protein YE0063 (222 aa).

Residues 100-222 (VLQNPEITQK…CVSFAERGWL (123 aa)) enclose the MPN domain. Positions 171, 173, and 184 each coordinate Zn(2+). The short motif at 171 to 184 (HNHPSGKAEPSQAD) is the JAMM motif element.

It belongs to the UPF0758 family. YicR subfamily.

This Yersinia enterocolitica serotype O:8 / biotype 1B (strain NCTC 13174 / 8081) protein is UPF0758 protein YE0063.